A 533-amino-acid chain; its full sequence is Metallothionein expression activator (533 aa).

C2H2-type zinc fingers lie at residues 443–472 (YVCL…SDRP) and 473–500 (YRCD…NGRP). The C2H2-type 3; atypical zinc finger occupies 501 to 524 (YVCECLKRFNRLDALNRHKQRNIC).

It is found in the nucleus. Regulates the transcription of genes required for cell separation. This chain is Metallothionein expression activator (ace2), found in Schizosaccharomyces pombe (strain 972 / ATCC 24843) (Fission yeast).